Here is a 131-residue protein sequence, read N- to C-terminus: Secreted RxLR effector protein 45 (131 aa).

An N-terminal signal peptide occupies residues 1-16 (MSIFIFISLVLGLAHQ). The RxLR signature appears at 56–59 (RPLR). An N-linked (GlcNAc...) asparagine glycan is attached at N128.

This sequence belongs to the RxLR effector family.

It is found in the secreted. Its subcellular location is the host nucleus. Functionally, secreted effector that completely suppresses the host cell death induced by cell death-inducing proteins. The polypeptide is Secreted RxLR effector protein 45 (Plasmopara viticola (Downy mildew of grapevine)).